The following is a 733-amino-acid chain: Ferric aerobactin receptor (733 aa).

Residues 1-25 (MMISKKYTLWALNPLLLTMMAPAVA) form the signal peptide. The TonB box motif lies at 31-38 (ETFVVSAN). The 111-residue stretch at 43–153 (TVAEMAQTTW…TGGLINIVTK (111 aa)) folds into the TBDR plug domain. The TBDR beta-barrel domain maps to 158 to 733 (ETIMEFEAGT…TFGLNYSVLF (576 aa)). The TonB C-terminal box signature appears at 716 to 733 (YDYKGRGRTFGLNYSVLF).

It belongs to the TonB-dependent receptor family.

The protein localises to the cell outer membrane. In terms of biological role, receptor for aerobactin. The chain is Ferric aerobactin receptor (iutA) from Klebsiella pneumoniae.